The primary structure comprises 133 residues: Putative biopolymer transport protein ExbD-like 2 (133 aa).

Topologically, residues 1–9 are cytoplasmic; the sequence is MKKVESMNV. Residues 10–30 form a helical membrane-spanning segment; sequence VPFIDIMLVLLVIVLTTASFV. Topologically, residues 31–133 are periplasmic; that stretch reads QTSKLPISIP…LVEDKKNQKN (103 aa).

Belongs to the ExbD/TolR family.

It localises to the cell inner membrane. The protein is Putative biopolymer transport protein ExbD-like 2 of Helicobacter pylori (strain J99 / ATCC 700824) (Campylobacter pylori J99).